The sequence spans 550 residues: CTP synthase (550 aa).

Residues 1 to 266 form an amidoligase domain region; sequence MNVNYIFVTG…DEYICKYFNL (266 aa). CTP is bound at residue Ser-14. Ser-14 lines the UTP pocket. ATP-binding positions include 15 to 20 and Asp-72; that span reads SLGKGI. Mg(2+) contacts are provided by Asp-72 and Glu-140. Residues 147–149, 187–192, and Lys-223 each bind CTP; these read DIE and KTKPTQ. UTP contacts are provided by residues 187 to 192 and Lys-223; that span reads KTKPTQ. The Glutamine amidotransferase type-1 domain occupies 291–546; that stretch reads TIGIVGKYIR…INAAIQYQCK (256 aa). Position 353 (Gly-353) interacts with L-glutamine. Cys-380 acts as the Nucleophile; for glutamine hydrolysis in catalysis. L-glutamine is bound by residues 381–384, Glu-404, and Arg-474; that span reads LGMQ. Catalysis depends on residues His-519 and Glu-521.

The protein belongs to the CTP synthase family. As to quaternary structure, homotetramer.

It carries out the reaction UTP + L-glutamine + ATP + H2O = CTP + L-glutamate + ADP + phosphate + 2 H(+). The catalysed reaction is L-glutamine + H2O = L-glutamate + NH4(+). The enzyme catalyses UTP + NH4(+) + ATP = CTP + ADP + phosphate + 2 H(+). It participates in pyrimidine metabolism; CTP biosynthesis via de novo pathway; CTP from UDP: step 2/2. With respect to regulation, allosterically activated by GTP, when glutamine is the substrate; GTP has no effect on the reaction when ammonia is the substrate. The allosteric effector GTP functions by stabilizing the protein conformation that binds the tetrahedral intermediate(s) formed during glutamine hydrolysis. Inhibited by the product CTP, via allosteric rather than competitive inhibition. Its function is as follows. Catalyzes the ATP-dependent amination of UTP to CTP with either L-glutamine or ammonia as the source of nitrogen. Regulates intracellular CTP levels through interactions with the four ribonucleotide triphosphates. This is CTP synthase from Blochmanniella floridana.